A 340-amino-acid chain; its full sequence is Protein S-acyltransferase 10 (340 aa).

A run of 2 helical transmembrane segments spans residues 34–54 (LLLKLALVALHLVFIGFLFLF) and 66–86 (PWYMGCYILLFSATLLQYFVT). In terms of domain architecture, DHHC spans 162 to 212 (LTCGYCHVEQPPRTKHCHDCDRCVLQFDHHCVWLGTCIGQKNHSKFWWYIC). Catalysis depends on C192, which acts as the S-palmitoyl cysteine intermediate. The next 2 helical transmembrane spans lie at 207–227 (FWWYICEETTLCIWTLIMYVD) and 241–261 (IIILLLVILAISLIFVLLLLI).

The protein belongs to the DHHC palmitoyltransferase family. As to expression, expressed in mature embryos, embryo sacs, cotyledons, whole seedlings, hydathodes, guard cells, sites of lateral root initiation, root tips and phloem, but not in xylem.

Its subcellular location is the vacuole membrane. The catalysed reaction is L-cysteinyl-[protein] + hexadecanoyl-CoA = S-hexadecanoyl-L-cysteinyl-[protein] + CoA. Its function is as follows. S-acyltransferase involved in protein lipid modification. Catalyzes the palmitoylation of proteins peripheral or integral to the tonoplast. Required for the tonoplast localization of CBL2, CBL3 and CBL6, but not for the plasma membrane localization of CBL9, for the endosome localization of RABF1 or for the endomembrane localization of RABF2B. The protein is Protein S-acyltransferase 10 (PAT10) of Arabidopsis thaliana (Mouse-ear cress).